A 295-amino-acid polypeptide reads, in one-letter code: Phosphoribosylaminoimidazole-succinocarboxamide synthase (295 aa).

It belongs to the SAICAR synthetase family.

It carries out the reaction 5-amino-1-(5-phospho-D-ribosyl)imidazole-4-carboxylate + L-aspartate + ATP = (2S)-2-[5-amino-1-(5-phospho-beta-D-ribosyl)imidazole-4-carboxamido]succinate + ADP + phosphate + 2 H(+). The protein operates within purine metabolism; IMP biosynthesis via de novo pathway; 5-amino-1-(5-phospho-D-ribosyl)imidazole-4-carboxamide from 5-amino-1-(5-phospho-D-ribosyl)imidazole-4-carboxylate: step 1/2. This is Phosphoribosylaminoimidazole-succinocarboxamide synthase from Desulforapulum autotrophicum (strain ATCC 43914 / DSM 3382 / VKM B-1955 / HRM2) (Desulfobacterium autotrophicum).